The primary structure comprises 388 residues: Lysocardiolipin acyltransferase 1 (388 aa).

Transmembrane regions (helical) follow at residues 9–29 and 46–66; these read FLLFLLLGSVFGSVFMLGPLL and IVATWLTLPVALLELVLGVKV. The HXXXXD motif signature appears at 85–90; sequence HRTRLD. A run of 2 helical transmembrane segments spans residues 321-341 and 342-362; these read IILVASLLYWSVFITAACASL and CLCPPAQFYFLFMVVFFLCQQ.

The protein belongs to the 1-acyl-sn-glycerol-3-phosphate acyltransferase family.

The protein resides in the endoplasmic reticulum membrane. It carries out the reaction a 1-acyl-sn-glycero-3-phosphate + an acyl-CoA = a 1,2-diacyl-sn-glycero-3-phosphate + CoA. The catalysed reaction is a 1-acyl-sn-glycero-3-phospho-(1D-myo-inositol) + an acyl-CoA = a 1,2-diacyl-sn-glycero-3-phospho-(1D-myo-inositol) + CoA. It catalyses the reaction 1-acyl-sn-glycero-3-phospho-(1'-sn-glycerol) + an acyl-CoA = a 1,2-diacyl-sn-glycero-3-phospho-(1'-sn-glycerol) + CoA. The enzyme catalyses 1-hexadecanoyl-sn-glycero-3-phosphate + (9Z)-octadecenoyl-CoA = 1-hexadecanoyl-2-(9Z-octadecenoyl)-sn-glycero-3-phosphate + CoA. It carries out the reaction 1-(9Z-octadecenoyl)-sn-glycero-3-phosphate + (9Z)-octadecenoyl-CoA = 1,2-di-(9Z-octadecenoyl)-sn-glycero-3-phosphate + CoA. The catalysed reaction is 1-(9Z,12Z)-octadecadienoyl-sn-glycero-3-phosphate + (9Z)-octadecenoyl-CoA = 1-(9Z,12Z)-octadecadienoyl-2-(9Z)-octadecenoyl-sn-glycero-3-phosphate + CoA. It catalyses the reaction 1-(9Z,12Z,15Z)-octadecatrienoyl-sn-glycero-3-phosphate + (9Z)-octadecenoyl-CoA = 1-(9Z,12Z,15Z)-octadecatrienoyl-2-(9Z)-octadecenoyl-sn-glycero-3-phosphate + CoA. The enzyme catalyses 1-(9Z-octadecenoyl)-sn-glycero-3-phosphate + hexadecanoyl-CoA = 1-(9Z)-octadecenoyl-2-hexadecanoyl-sn-glycero-3-phosphate + CoA. It carries out the reaction 1-(9Z-octadecenoyl)-sn-glycero-3-phosphate + octadecanoyl-CoA = 1-(9Z-octadecenoyl)-2-octadecanoyl-sn-glycero-3-phosphate + CoA. The catalysed reaction is 1-acyl-sn-glycero-3-phospho-(1'-sn-glycerol) + (9Z)-octadecenoyl-CoA = 1-acyl-2-(9Z-octadecenoyl)-sn-glycero-3-phospho-(1'-sn-glycerol) + CoA. It catalyses the reaction a 1-acyl-sn-glycero-3-phospho-(1D-myo-inositol) + (9Z)-octadecenoyl-CoA = a 1-acyl-2-(9Z-octadecenoyl)-sn-glycero-3-phospho-(1D-myo-inositol) + CoA. The enzyme catalyses 1-hexadecanoyl-sn-glycero-3-phospho-(1D-myo-inositol) + hexadecanoyl-CoA = 1,2-dihexadecanoyl-sn-glycero-3-phospho-(1D-myo-inositol) + CoA. It carries out the reaction 1-hexadecanoyl-sn-glycero-3-phospho-(1D-myo-inositol) + octadecanoyl-CoA = 1-hexadecanoyl-2-octadecanoyl-sn-glycero-3-phospho-(1D-myo-inositol) + CoA. The catalysed reaction is 1-hexadecanoyl-sn-glycero-3-phospho-(1D-myo-inositol) + (9Z)-octadecenoyl-CoA = 1-hexadecanoyl-2-(9Z-octadecenoyl)-sn-glycero-3-phospho-(1D-myo-inositol) + CoA. It catalyses the reaction 1-hexadecanoyl-sn-glycero-3-phospho-(1D-myo-inositol) + (9Z,12Z)-octadecadienoyl-CoA = 1-hexadecanoyl-2-(9Z,12Z-octadecadienoyl)-sn-glycero-3-phospho-(1D-myo-inositol) + CoA. The enzyme catalyses 1-hexadecanoyl-sn-glycero-3-phospho-(1D-myo-inositol) + (5Z,8Z,11Z,14Z)-eicosatetraenoyl-CoA = 1-hexadecanoyl-2-(5Z,8Z,11Z,14Z-eicosatetraenoyl)-sn-glycero-3-phospho-D-myo-inositol + CoA. It carries out the reaction 1-hexadecanoyl-sn-glycero-3-phospho-(1'-sn-glycerol) + hexadecanoyl-CoA = 1,2-dihexadecanoyl-sn-glycero-3-phospho-(1'-sn-glycerol) + CoA. The catalysed reaction is 1-hexadecanoyl-sn-glycero-3-phospho-(1'-sn-glycerol) + octadecanoyl-CoA = 1-hexadecanoyl-2-octadecanoyl-sn-glycero-3-phospho-(1'-sn-glycerol) + CoA. It catalyses the reaction 1-hexadecanoyl-sn-glycero-3-phospho-(1'-sn-glycerol) + (9Z)-octadecenoyl-CoA = 1-hexadecanoyl-2-(9Z-octadecenoyl)-sn-glycero-3-phospho-(1'-sn-glycerol) + CoA. The enzyme catalyses 1-hexadecanoyl-sn-glycero-3-phospho-(1'-sn-glycerol) + (9Z,12Z)-octadecadienoyl-CoA = 1-hexadecanoyl-2-(9Z,12Z-octadecadienoyl)-sn-glycero-3-phospho-(1'-sn-glycerol) + CoA. It carries out the reaction 1-tetradecanoyl-sn-glycero-3-phospho-(1'-sn-glycerol) + (9Z)-octadecenoyl-CoA = 1-tetradecanoyl-2-(9Z-octadecenoyl)-sn-glycero-3-phospho-(1'-sn-glycerol) + CoA. The catalysed reaction is 1-octadecanoyl-sn-glycero-3-phospho-(1'-sn-glycerol) + (9Z)-octadecenoyl-CoA = 1-octadecanoyl-2-(9Z-octadecenoyl)-sn-glycero-3-phospho-(1'-sn-glycerol) + CoA. It catalyses the reaction 1-(9Z-octadecenoyl)-sn-glycero-3-phospho-(1'-sn-glycerol) + (9Z)-octadecenoyl-CoA = 1,2-di-(9Z-octadecenoyl)-sn-glycero-3-phospho-(1'-sn-glycerol) + CoA. The enzyme catalyses 1-hexadecanoyl-sn-glycero-3-phospho-(1D-myo-inositol) + dodecanoyl-CoA = 1-hexadecanoyl-2-dodecanoyl-sn-glycero-3-phospho-(1D-myo-inositol) + CoA. It carries out the reaction 1',3'-bis-[1-acyl-sn-glycero-3-phospho]-glycerol + (9Z)-octadecenoyl-CoA = 1'-[1-acyl-2-(9Z)-octadecenoyl-sn-glycero-3-phospho],3'-[1-acyl,2-hydroxy-sn-glycero-3-phospho]-glycerol + CoA. The catalysed reaction is 1'-[1,2-diacyl-sn-glycero-3-phospho],3'-[1-acyl-sn-glycero-3-phospho]-glycerol + (9Z)-octadecenoyl-CoA = 1'-[1,2-diacyl-sn-glycero-3-phospho],3'-[1-acyl,2-(9Z)-octadecenoyl-sn-glycero-3-phospho]-glycerol + CoA. It catalyses the reaction 1'-[1,2-diacyl-sn-glycero-3-phospho],3'-[1-acyl-sn-glycero-3-phospho]-glycerol + (9Z,12Z)-octadecadienoyl-CoA = 1'-[1,2-diacyl-sn-glycero-3-phospho],3'-[1-acyl,2-(9Z,12Z)-octadecadienoyl-sn-glycero-3-phospho]-glycerol + CoA. The enzyme catalyses 1'-[1,2-diacyl-sn-glycero-3-phospho],3'-[1-acyl-sn-glycero-3-phospho]-glycerol + dodecanoyl-CoA = 1'-[1,2-diacyl-sn-glycero-3-phospho],3'-[1-acyl,2-dodecanoyl-sn-glycero-3-phospho]-glycerol + CoA. It carries out the reaction 1',3'-bis-[1-acyl-sn-glycero-3-phospho]-glycerol + dodecanoyl-CoA = 1'-[1-acyl-2-dodecanoyl-sn-glycero-3-phospho],3'-[1-acyl,2-hydroxy-sn-glycero-3-phospho]-glycerol + CoA. The catalysed reaction is a 1-acyl-sn-glycero-3-phosphate + (9Z)-octadecenoyl-CoA = a 1-acyl-2-(9Z-octadecenoyl)-sn-glycero-3-phosphate + CoA. It catalyses the reaction 1',3'-bis-[1-acyl-sn-glycero-3-phospho]-glycerol + (9Z,12Z)-octadecadienoyl-CoA = 1'-[1-acyl-2-(9Z,12Z)-octadecadienoyl-sn-glycero-3-phospho],3'-[1-acyl,2-hydroxy-sn-glycero-3-phospho]-glycerol + CoA. The enzyme catalyses 1',3'-bis-[1-acyl-sn-glycero-3-phospho]-glycerol + hexadecanoyl-CoA = 1'-[1-acyl-2-hexadecanoyl-sn-glycero-3-phospho],3'-[1-acyl,2-hydroxy-sn-glycero-3-phospho]-glycerol + CoA. It carries out the reaction 1',3'-bis-[1-acyl-sn-glycero-3-phospho]-glycerol + octadecanoyl-CoA = 1'-[1-acyl-2-octadecanoyl-sn-glycero-3-phospho],3'-[1-acyl,2-hydroxy-sn-glycero-3-phospho]-glycerol + CoA. The catalysed reaction is 1'-[1,2-diacyl-sn-glycero-3-phospho],3'-[1-acyl-sn-glycero-3-phospho]-glycerol + octanoyl-CoA = 1'-[1,2-diacyl-sn-glycero-3-phospho],3'-[1-acyl,2-octanoyl-sn-glycero-3-phospho]-glycerol + CoA. It catalyses the reaction 1',3'-bis-[1-acyl-sn-glycero-3-phospho]-glycerol + octanoyl-CoA = 1'-[1-acyl-2-octanoyl-sn-glycero-3-phospho],3'-[1-acyl,2-hydroxy-sn-glycero-3-phospho]-glycerol + CoA. The enzyme catalyses 1'-[1,2-diacyl-sn-glycero-3-phospho],3'-[1-acyl-sn-glycero-3-phospho]-glycerol + hexadecanoyl-CoA = 1'-[1,2-diacyl-sn-glycero-3-phospho],3'-[1-acyl,2-hexadecanoyl-sn-glycero-3-phospho]-glycerol + CoA. It carries out the reaction 1'-[1,2-diacyl-sn-glycero-3-phospho],3'-[1-acyl-sn-glycero-3-phospho]-glycerol + (5Z,8Z,11Z,14Z)-eicosatetraenoyl-CoA = 1'-[1,2-diacyl-sn-glycero-3-phospho],3'-[1-acyl,2-(5Z,8Z,11Z,14Z)-eicosatetraenoyl-sn-glycero-3-phospho]-glycerol + CoA. The catalysed reaction is 1',3'-bis-[1-acyl-sn-glycero-3-phospho]-glycerol + (5Z,8Z,11Z,14Z)-eicosatetraenoyl-CoA = 1'-[1-acyl-2-(5Z,8Z,11Z,14Z)-eicosatetraenoyl-sn-glycero-3-phospho],3'-[1-acyl,2-hydroxy-sn-glycero-3-phospho]-glycerol + CoA. It catalyses the reaction a 1-acyl-sn-glycero-3-phospho-(1D-myo-inositol) + octadecanoyl-CoA = a 1-acyl-2-octadecanoyl-sn-glycero-3-phospho-(1D-myo-inositol) + CoA. The enzyme catalyses a 2-acyl-sn-glycero-3-phospho-D-myo-inositol + octadecanoyl-CoA = 1-octadecanoyl-2-acyl-sn-glycero-3-phospho-1D-myo-inositol + CoA. It functions in the pathway phospholipid metabolism; CDP-diacylglycerol biosynthesis; CDP-diacylglycerol from sn-glycerol 3-phosphate: step 2/3. Functionally, exhibits acyl-CoA:lysocardiolipin acyltransferase (ALCAT) activity; catalyzes the reacylation of lyso-cardiolipin to cardiolipin (CL), a key step in CL remodeling. Recognizes both monolysocardiolipin and dilysocardiolipin as substrates with a preference for linoleoyl-CoA and oleoyl-CoA as acyl donors. Also exhibits 1-acyl-sn-glycerol-3-phosphate acyltransferase activity (AGPAT) activity; converts 1-acyl-sn-glycerol-3- phosphate (lysophosphatidic acid or LPA) into 1,2-diacyl-sn-glycerol-3- phosphate (phosphatidic acid or PA) by incorporating an acyl moiety at the sn-2 position of the glycerol backbone. Possesses both lysophosphatidylinositol acyltransferase (LPIAT) and lysophosphatidylglycerol acyltransferase (LPGAT) activities. Required for establishment of the hematopoietic and endothelial lineages. In Danio rerio (Zebrafish), this protein is Lysocardiolipin acyltransferase 1 (lclat1).